A 62-amino-acid polypeptide reads, in one-letter code: Large ribosomal subunit protein uL30 (62 aa).

Belongs to the universal ribosomal protein uL30 family. Part of the 50S ribosomal subunit.

The sequence is that of Large ribosomal subunit protein uL30 from Pseudoalteromonas atlantica (strain T6c / ATCC BAA-1087).